The chain runs to 404 residues: Probable tRNA sulfurtransferase (404 aa).

The THUMP domain occupies 60–165 (RSVIEALKPV…DEAAYLSHED (106 aa)). Residues 183–184 (ML), 208–209 (HF), R265, G287, and Q296 each bind ATP.

This sequence belongs to the ThiI family.

It is found in the cytoplasm. The catalysed reaction is [ThiI sulfur-carrier protein]-S-sulfanyl-L-cysteine + a uridine in tRNA + 2 reduced [2Fe-2S]-[ferredoxin] + ATP + H(+) = [ThiI sulfur-carrier protein]-L-cysteine + a 4-thiouridine in tRNA + 2 oxidized [2Fe-2S]-[ferredoxin] + AMP + diphosphate. It carries out the reaction [ThiS sulfur-carrier protein]-C-terminal Gly-Gly-AMP + S-sulfanyl-L-cysteinyl-[cysteine desulfurase] + AH2 = [ThiS sulfur-carrier protein]-C-terminal-Gly-aminoethanethioate + L-cysteinyl-[cysteine desulfurase] + A + AMP + 2 H(+). Its pathway is cofactor biosynthesis; thiamine diphosphate biosynthesis. Catalyzes the ATP-dependent transfer of a sulfur to tRNA to produce 4-thiouridine in position 8 of tRNAs, which functions as a near-UV photosensor. Also catalyzes the transfer of sulfur to the sulfur carrier protein ThiS, forming ThiS-thiocarboxylate. This is a step in the synthesis of thiazole, in the thiamine biosynthesis pathway. The sulfur is donated as persulfide by IscS. The polypeptide is Probable tRNA sulfurtransferase (Streptococcus equi subsp. equi (strain 4047)).